A 164-amino-acid chain; its full sequence is MRLTTKGRYAVTAMLDLALHAQNGPVSLADISERQGISLSYLEQLFAKLRRNSLVTSVRGPGGGYQLSRSMAAIQVAEVIDAVNESVDVTRCQGDRGCRSGEVCLTHYLWCDLSHQIHEFLSGISLADLVARSDVQDLVRLQDRRQGGGCPLPYAGKIEASAIE.

In terms of domain architecture, HTH rrf2-type spans 2 to 131; that stretch reads RLTTKGRYAV…SGISLADLVA (130 aa).

This Azotobacter vinelandii protein is Putative HTH-type transcriptional regulator ORF2.